We begin with the raw amino-acid sequence, 34 residues long: Peptide 9797 (34 aa).

Expressed by the venom gland.

It is found in the secreted. This chain is Peptide 9797, found in Tityus stigmurus (Brazilian scorpion).